A 350-amino-acid polypeptide reads, in one-letter code: Nicotinate-nucleotide--dimethylbenzimidazole phosphoribosyltransferase (350 aa).

The active-site Proton acceptor is the E317.

The protein belongs to the CobT family.

The enzyme catalyses 5,6-dimethylbenzimidazole + nicotinate beta-D-ribonucleotide = alpha-ribazole 5'-phosphate + nicotinate + H(+). Its pathway is nucleoside biosynthesis; alpha-ribazole biosynthesis; alpha-ribazole from 5,6-dimethylbenzimidazole: step 1/2. Its function is as follows. Catalyzes the synthesis of alpha-ribazole-5'-phosphate from nicotinate mononucleotide (NAMN) and 5,6-dimethylbenzimidazole (DMB). The chain is Nicotinate-nucleotide--dimethylbenzimidazole phosphoribosyltransferase from Shewanella sp. (strain MR-4).